Reading from the N-terminus, the 433-residue chain is Lipase 2 (433 aa).

The Involved in the stabilization of the negatively charged intermediate by the formation of the oxyanion hole signature appears at His-165–Gly-167. Ser-239 serves as the catalytic Charge relay system. Active-site residues include Asp-361 and His-391.

It belongs to the 'GDXG' lipolytic enzyme family.

It catalyses the reaction a triacylglycerol + H2O = a diacylglycerol + a fatty acid + H(+). This Moraxella sp. (strain TA144) protein is Lipase 2 (lip2).